We begin with the raw amino-acid sequence, 204 residues long: bMERB domain-containing protein 1 (204 aa).

Residues 3–150 enclose the bMERB domain; that stretch reads LKQSLSTHLE…EQEEDKEMAD (148 aa). Positions 162–187 are disordered; that stretch reads VTKSPASSRAEKKAEPPPSKPTVAKT.

This chain is bMERB domain-containing protein 1 (BMERB1), found in Pongo abelii (Sumatran orangutan).